A 121-amino-acid chain; its full sequence is Small ribosomal subunit protein uS13 (121 aa).

Residues 94-121 (GLPLRGQRTRTNARTRKGPRRAAQALKK) are disordered.

This sequence belongs to the universal ribosomal protein uS13 family. In terms of assembly, part of the 30S ribosomal subunit. Forms a loose heterodimer with protein S19. Forms two bridges to the 50S subunit in the 70S ribosome.

Located at the top of the head of the 30S subunit, it contacts several helices of the 16S rRNA. In the 70S ribosome it contacts the 23S rRNA (bridge B1a) and protein L5 of the 50S subunit (bridge B1b), connecting the 2 subunits; these bridges are implicated in subunit movement. Contacts the tRNAs in the A and P-sites. This Burkholderia mallei (strain NCTC 10247) protein is Small ribosomal subunit protein uS13.